The chain runs to 1020 residues: Phosphatidylinositol 3-kinase VPS34 (1020 aa).

In terms of domain architecture, C2 PI3K-type spans 49-210 (LSTKFEDPTV…NWLDKMVLPK (162 aa)). Residues 331 to 577 (DKELKPTPQL…DGPIKIYMDI (247 aa)) form the PIK helical domain. The PI3K/PI4K catalytic domain occupies 666 to 1004 (YPEESSVFKS…LINDSVNAFL (339 aa)). The tract at residues 672-678 (VFKSSLA) is G-loop. The interval 873-881 (GVGDRHLDN) is catalytic loop. The activation loop stretch occupies residues 892–913 (HADFGYILGRDPKPFPPLMKLP).

It belongs to the PI3/PI4-kinase family. In terms of assembly, component of the autophagy-specific VPS34 PI3-kinase complex I composed of at least VPS15, VPS30, VPS34, and of the VPS34 PI3-kinase complex II composed of VPS15, VPS30, VPS34 and VPS38. Interacts with VMNA7. Post-translationally, autophosphorylated.

The protein localises to the golgi apparatus. Its subcellular location is the trans-Golgi network membrane. It is found in the endosome membrane. It carries out the reaction a 1,2-diacyl-sn-glycero-3-phospho-(1D-myo-inositol) + ATP = a 1,2-diacyl-sn-glycero-3-phospho-(1D-myo-inositol-3-phosphate) + ADP + H(+). In terms of biological role, multifunctional phosphatidylinositol 3-kinase involved in acidification of vacuoles, pH-dependent cell growth, and autophagocytosis. Plays an important role in protein transport and virulence. Component of the autophagy-specific VPS34 PI3-kinase complex I essential to recruit the ATG8-phosphatidylinositol conjugate and the ATG12-ATG5 conjugate to the pre-autophagosomal structure. Also involved in endosome-to-Golgi retrograde transport as part of the VPS34 PI3-kinase complex II. This second complex is required for the endosome-to-Golgi retrieval of PEP1 and KEX2, and the recruitment of VPS5 and VPS7, two components of the retromer complex, to endosomal membranes (probably through the synthesis of a specific pool of phosphatidylinositol 3-phosphate recruiting the retromer to the endosomes). Finally, it might also be involved in ethanol tolerance and cell wall integrity. In Candida albicans (strain SC5314 / ATCC MYA-2876) (Yeast), this protein is Phosphatidylinositol 3-kinase VPS34.